The sequence spans 455 residues: MPRLARRIYGIENEYGITCTQRGQRRLSPDEVARYLFRRVVSWGRSSNVFLENGARLYLDVGSHPEYATPECDSLSDLVAHDKAGERILESLAHSAEAKMREEGIRGDVFLLKNNTDSAGNSYGCHENYLTVRVDDLTRLVEVLIPFLVSRQIIAGAGKVLLTSRGPLYAVSQRAEHIWEGVSSATTRSRPIINTRDEPHADAERYRRLHVIVGDSNMSQWATYLKVGAMAIVLRLLEEEVVLRDLTLENPIRAIREIAHDTELERTVRLVNGRELTGLEIQEAYFERAERYHERIGLPADEARALDMWREALKALRANDHEALFGKVDWVTKLTLIEAFRARHQLPLSHPQVSLLDLQYHDISRERGLFARLEAKGRVPRIVDDETIERAVDEPPATTRAALRGRFIRAAKEAHRDYTVDWVHLKLNDQAQRTVMLKDPFASEDERVDRLLTSI.

Glutamate 12 contributes to the Mg(2+) binding site. Arginine 56 provides a ligand contact to ATP. Tyrosine 58 provides a ligand contact to Mg(2+). The active-site Proton acceptor is aspartate 60. Residue glutamate 66 coordinates Mg(2+). Positions 69 and 422 each coordinate ATP.

This sequence belongs to the Pup ligase/Pup deamidase family. Pup-conjugating enzyme subfamily.

It carries out the reaction ATP + [prokaryotic ubiquitin-like protein]-L-glutamate + [protein]-L-lysine = ADP + phosphate + N(6)-([prokaryotic ubiquitin-like protein]-gamma-L-glutamyl)-[protein]-L-lysine.. It participates in protein degradation; proteasomal Pup-dependent pathway. The protein operates within protein modification; protein pupylation. In terms of biological role, catalyzes the covalent attachment of the prokaryotic ubiquitin-like protein modifier Pup to the proteasomal substrate proteins, thereby targeting them for proteasomal degradation. This tagging system is termed pupylation. The ligation reaction involves the side-chain carboxylate of the C-terminal glutamate of Pup and the side-chain amino group of a substrate lysine. The polypeptide is Pup--protein ligase (Acidimicrobium ferrooxidans (strain DSM 10331 / JCM 15462 / NBRC 103882 / ICP)).